The primary structure comprises 436 residues: Flagellum-specific ATP synthase (436 aa).

165–172 (SGSGVGKS) provides a ligand contact to ATP.

The protein belongs to the ATPase alpha/beta chains family.

The protein localises to the cytoplasm. It carries out the reaction ATP + H2O + 4 H(+)(in) = ADP + phosphate + 5 H(+)(out). Probable catalytic subunit of a protein translocase for flagellum-specific export, or a proton translocase involved in local circuits at the flagellum. May be involved in a specialized protein export pathway that proceeds without signal peptide cleavage. This chain is Flagellum-specific ATP synthase (fliI), found in Borreliella burgdorferi (strain ATCC 35210 / DSM 4680 / CIP 102532 / B31) (Borrelia burgdorferi).